Reading from the N-terminus, the 343-residue chain is MGDVVMNERELILAIETSCDETSAAVIENGTTILSNVVSSQIDSHKRFGGVVPEIASRHHVEQITVIVEEAMHEAGVDFADLAAVAVTEGPGLVGALLIGVNAAKAIAFAHQLPLIGVHHIAGHIYANRLLKELEFPLLALVVSGGHTELIYMENHGEFEVIGETRDDAVGEAYDKVARTLGLPYPGGPHIDRLAVNGEDTLQFPRAWLEPDSFDFSFSGLKSAVINTLHNAKQRGENVQAEDVAASFQASVIDVLVTKTKKAAEEYKVRQVLLAGGVAANKGLRTALEEAFFKEPIDLVIPPLSLCTDNAAMIGAAASIKFKQQTFAGMDLNGQPSLELEND.

Fe cation is bound by residues His-120 and His-124. Substrate is bound by residues 142-146 (VVSGG), Asp-175, Gly-188, Asp-192, and Asn-281. Asp-309 lines the Fe cation pocket.

It belongs to the KAE1 / TsaD family. Requires Fe(2+) as cofactor.

It is found in the cytoplasm. The catalysed reaction is L-threonylcarbamoyladenylate + adenosine(37) in tRNA = N(6)-L-threonylcarbamoyladenosine(37) in tRNA + AMP + H(+). In terms of biological role, required for the formation of a threonylcarbamoyl group on adenosine at position 37 (t(6)A37) in tRNAs that read codons beginning with adenine. Is involved in the transfer of the threonylcarbamoyl moiety of threonylcarbamoyl-AMP (TC-AMP) to the N6 group of A37, together with TsaE and TsaB. TsaD likely plays a direct catalytic role in this reaction. The chain is tRNA N6-adenosine threonylcarbamoyltransferase from Halalkalibacterium halodurans (strain ATCC BAA-125 / DSM 18197 / FERM 7344 / JCM 9153 / C-125) (Bacillus halodurans).